Consider the following 392-residue polypeptide: Carbamoyl phosphate synthase small chain (392 aa).

The CPSase stretch occupies residues 1-174 (MSKKALLALE…EVIVENPEGD (174 aa)). L-glutamine contacts are provided by Ser47, Gly224, and Gly226. A Glutamine amidotransferase type-1 domain is found at 176–392 (SVVVLDSGVK…EFKRLIKEVR (217 aa)). The active-site Nucleophile is the Cys252. L-glutamine is bound by residues Leu253, Gln256, Asn294, Gly296, and Phe297. Active-site residues include His367 and Glu369.

The protein belongs to the CarA family. In terms of assembly, composed of two chains; the small (or glutamine) chain promotes the hydrolysis of glutamine to ammonia, which is used by the large (or ammonia) chain to synthesize carbamoyl phosphate. Tetramer of heterodimers (alpha,beta)4.

It carries out the reaction hydrogencarbonate + L-glutamine + 2 ATP + H2O = carbamoyl phosphate + L-glutamate + 2 ADP + phosphate + 2 H(+). The catalysed reaction is L-glutamine + H2O = L-glutamate + NH4(+). Its pathway is amino-acid biosynthesis; L-arginine biosynthesis; carbamoyl phosphate from bicarbonate: step 1/1. It participates in pyrimidine metabolism; UMP biosynthesis via de novo pathway; (S)-dihydroorotate from bicarbonate: step 1/3. Its function is as follows. Small subunit of the glutamine-dependent carbamoyl phosphate synthetase (CPSase). CPSase catalyzes the formation of carbamoyl phosphate from the ammonia moiety of glutamine, carbonate, and phosphate donated by ATP, constituting the first step of 2 biosynthetic pathways, one leading to arginine and/or urea and the other to pyrimidine nucleotides. The small subunit (glutamine amidotransferase) binds and cleaves glutamine to supply the large subunit with the substrate ammonia. This is Carbamoyl phosphate synthase small chain from Thermotoga maritima (strain ATCC 43589 / DSM 3109 / JCM 10099 / NBRC 100826 / MSB8).